The sequence spans 164 residues: MASFSGDETAPFFGFLGAAAALVFSCMGAAYGTAKSGVGVASMGVMRPELVMKSIVPVVMAGVLGIYGLIIAVIISTGINPKAKSYYLFDGYAHLSSGLACGLAGLSAGMAIGIVGDAGVRANAQQPKLFVGMILILIFAEALALYGLIVGIILSSRAGQSRAD.

The Lumenal portion of the chain corresponds to 1 to 9 (MASFSGDET). Residues 10–32 (APFFGFLGAAAALVFSCMGAAYG) traverse the membrane as a helical segment. Residues 33-54 (TAKSGVGVASMGVMRPELVMKS) lie on the Cytoplasmic side of the membrane. The helical transmembrane segment at 55–75 (IVPVVMAGVLGIYGLIIAVII) threads the bilayer. Topologically, residues 76–94 (STGINPKAKSYYLFDGYAH) are lumenal. The chain crosses the membrane as a helical span at residues 95–116 (LSSGLACGLAGLSAGMAIGIVG). The Cytoplasmic portion of the chain corresponds to 117 to 128 (DAGVRANAQQPK). A helical transmembrane segment spans residues 129–154 (LFVGMILILIFAEALALYGLIVGIIL). The Lumenal portion of the chain corresponds to 155-164 (SSRAGQSRAD).

This sequence belongs to the V-ATPase proteolipid subunit family. V-ATPase is a heteromultimeric enzyme composed of a peripheral catalytic V1 complex (main components: subunits A, B, C, D, E, and F) attached to an integral membrane V0 proton pore complex (main component: the proteolipid protein; which is present as a hexamer that forms the proton-conducting pore).

The protein localises to the vacuole membrane. In terms of biological role, proton-conducting pore forming subunit of the membrane integral V0 complex of vacuolar ATPase. V-ATPase is responsible for acidifying a variety of intracellular compartments in eukaryotic cells. The chain is V-type proton ATPase 16 kDa proteolipid subunit from Vigna radiata var. radiata (Mung bean).